The sequence spans 141 residues: Large ribosomal subunit protein uL11 (141 aa).

It belongs to the universal ribosomal protein uL11 family. Part of the ribosomal stalk of the 50S ribosomal subunit. Interacts with L10 and the large rRNA to form the base of the stalk. L10 forms an elongated spine to which L12 dimers bind in a sequential fashion forming a multimeric L10(L12)X complex. Post-translationally, one or more lysine residues are methylated.

Functionally, forms part of the ribosomal stalk which helps the ribosome interact with GTP-bound translation factors. The chain is Large ribosomal subunit protein uL11 from Thermosipho africanus (strain TCF52B).